The chain runs to 371 residues: 3-isopropylmalate dehydrogenase B (371 aa).

79–93 (GSKVDHIRRGLDGPE) is a binding site for NAD(+). Positions 100, 110, 142, and 229 each coordinate substrate. The Mg(2+) site is built by Asp-229, Asp-254, and Asp-258. 296 to 308 (GSAPTIAGKNIAN) serves as a coordination point for NAD(+).

This sequence belongs to the isocitrate and isopropylmalate dehydrogenases family. Homodimer. It depends on Mg(2+) as a cofactor. Mn(2+) is required as a cofactor.

It is found in the cytoplasm. The enzyme catalyses (2R,3S)-3-isopropylmalate + NAD(+) = 4-methyl-2-oxopentanoate + CO2 + NADH. Its pathway is amino-acid biosynthesis; L-leucine biosynthesis; L-leucine from 3-methyl-2-oxobutanoate: step 3/4. Functionally, catalyzes the oxidation of 3-carboxy-2-hydroxy-4-methylpentanoate (3-isopropylmalate) to 3-carboxy-4-methyl-2-oxopentanoate. The product decarboxylates to 4-methyl-2 oxopentanoate. In Aspergillus niger, this protein is 3-isopropylmalate dehydrogenase B (leu2B).